Consider the following 1043-residue polypeptide: Calcium-transporting ATPase 1, plasma membrane-type (1043 aa).

At 1 to 178 (MSFIRKKSME…FLWDASQDMT (178 aa)) the chain is on the cytoplasmic side. The next 2 helical transmembrane spans lie at 179-199 (LLLL…TEGW) and 202-222 (GMYD…ITAA). Residues 223–258 (SDYKQSLQFRDLDKEKKKIDVQVTRDGYRQKVSIYD) lie on the Cytoplasmic side of the membrane. A run of 2 helical transmembrane segments spans residues 259–279 (IVVG…DGLF) and 356–376 (VATI…TVLM). Over 377 to 395 (ARFLLGKAGAPGGLLRWRM) the chain is Cytoplasmic. Residues 396 to 416 (VDALAVLNFFAVAVTIIVVAV) traverse the membrane as a helical segment. The 4-aspartylphosphate intermediate role is filled by Asp-460. Mg(2+) contacts are provided by Asp-761 and Asp-765. A helical membrane pass occupies residues 824–844 (LTVNVVALMVNFISASFTGSA). A topological domain (cytoplasmic) is located at residue Pro-845. 2 helical membrane-spanning segments follow: residues 846–866 (LTIV…ALAL) and 891–911 (VMWR…GVLL). Residues 912-955 (LRGKSLLQINGPQADSLLNTFVFNTFVFCQVFNEVNSREMEKIN) lie on the Cytoplasmic side of the membrane. Helical transmembrane passes span 956 to 976 (VFSG…TAGF) and 998 to 1018 (WLTS…LKCI). Topologically, residues 1019-1043 (PVESGSDASDRHDGYRPIPTGPSAV) are cytoplasmic. Residues 1023-1043 (GSDASDRHDGYRPIPTGPSAV) are disordered.

The protein belongs to the cation transport ATPase (P-type) (TC 3.A.3) family. Type IIB subfamily.

The protein resides in the membrane. The enzyme catalyses Ca(2+)(in) + ATP + H2O = Ca(2+)(out) + ADP + phosphate + H(+). Activated by calmodulin. Functionally, this magnesium-dependent enzyme catalyzes the hydrolysis of ATP coupled with the translocation of calcium from the cytosol out of the cell, into the endoplasmic reticulum, or into organelles. In Oryza sativa subsp. japonica (Rice), this protein is Calcium-transporting ATPase 1, plasma membrane-type.